We begin with the raw amino-acid sequence, 782 residues long: Endonuclease MutS2 (782 aa).

336–343 contributes to the ATP binding site; that stretch reads GPNTGGKT. Residues 707–782 form the Smr domain; the sequence is LDLRGYRYED…GFGVTVATLK (76 aa).

This sequence belongs to the DNA mismatch repair MutS family. MutS2 subfamily. In terms of assembly, homodimer. Binds to stalled ribosomes, contacting rRNA.

Functionally, endonuclease that is involved in the suppression of homologous recombination and thus may have a key role in the control of bacterial genetic diversity. In terms of biological role, acts as a ribosome collision sensor, splitting the ribosome into its 2 subunits. Detects stalled/collided 70S ribosomes which it binds and splits by an ATP-hydrolysis driven conformational change. Acts upstream of the ribosome quality control system (RQC), a ribosome-associated complex that mediates the extraction of incompletely synthesized nascent chains from stalled ribosomes and their subsequent degradation. Probably generates substrates for RQC. This is Endonuclease MutS2 from Staphylococcus aureus (strain Mu50 / ATCC 700699).